The chain runs to 1029 residues: Carbamoyl phosphate synthase large chain (1029 aa).

Residues 1–402 form a carboxyphosphate synthetic domain region; the sequence is MPKRTDLQTI…SLQKALRSTE (402 aa). Arg-129, Arg-169, Gly-175, Gly-176, Glu-208, Ile-210, Glu-215, Gly-241, Val-242, His-243, Gln-285, and Glu-299 together coordinate ATP. The ATP-grasp 1 domain maps to 133–328; it reads QAAMKKIGVE…IAKIAALLAV (196 aa). 3 residues coordinate Mg(2+): Gln-285, Glu-299, and Asn-301. 3 residues coordinate Mn(2+): Gln-285, Glu-299, and Asn-301. The interval 403-544 is oligomerization domain; the sequence is SDIRGVYAEM…YHYSTYEWED (142 aa). Residues 545 to 929 are carbamoyl phosphate synthetic domain; it reads EVTGTDKPKV…AFYRAQLGAK (385 aa). Residues 671–863 enclose the ATP-grasp 2 domain; it reads NALCERLGLS…LAKSAARIAV (193 aa). ATP contacts are provided by Arg-707, Gln-747, Leu-749, Glu-754, Gly-779, Val-780, His-781, Ser-782, Gln-822, and Glu-834. Residues Gln-822, Glu-834, and Asn-836 each coordinate Mg(2+). Mn(2+) is bound by residues Gln-822, Glu-834, and Asn-836. The MGS-like domain maps to 930–1028; the sequence is SYLPLSGTAL…QDWQTQEAVA (99 aa). Positions 930 to 1029 are allosteric domain; the sequence is SYLPLSGTAL…DWQTQEAVAG (100 aa).

It belongs to the CarB family. As to quaternary structure, composed of two chains; the small (or glutamine) chain promotes the hydrolysis of glutamine to ammonia, which is used by the large (or ammonia) chain to synthesize carbamoyl phosphate. Tetramer of heterodimers (alpha,beta)4. Requires Mg(2+) as cofactor. Mn(2+) is required as a cofactor.

It catalyses the reaction hydrogencarbonate + L-glutamine + 2 ATP + H2O = carbamoyl phosphate + L-glutamate + 2 ADP + phosphate + 2 H(+). The enzyme catalyses hydrogencarbonate + NH4(+) + 2 ATP = carbamoyl phosphate + 2 ADP + phosphate + 2 H(+). It functions in the pathway amino-acid biosynthesis; L-arginine biosynthesis; carbamoyl phosphate from bicarbonate: step 1/1. Its pathway is pyrimidine metabolism; UMP biosynthesis via de novo pathway; (S)-dihydroorotate from bicarbonate: step 1/3. Its function is as follows. Large subunit of the glutamine-dependent carbamoyl phosphate synthetase (CPSase). CPSase catalyzes the formation of carbamoyl phosphate from the ammonia moiety of glutamine, carbonate, and phosphate donated by ATP, constituting the first step of 2 biosynthetic pathways, one leading to arginine and/or urea and the other to pyrimidine nucleotides. The large subunit (synthetase) binds the substrates ammonia (free or transferred from glutamine from the small subunit), hydrogencarbonate and ATP and carries out an ATP-coupled ligase reaction, activating hydrogencarbonate by forming carboxy phosphate which reacts with ammonia to form carbamoyl phosphate. This is Carbamoyl phosphate synthase large chain from Deinococcus deserti (strain DSM 17065 / CIP 109153 / LMG 22923 / VCD115).